The following is a 424-amino-acid chain: Choline-phosphate cytidylyltransferase (424 aa).

The segment at 1–70 (MANPTTGKSS…RKRRRLTKEF (70 aa)) is disordered. Positions 14-24 (KLSNSSLSNLF) are enriched in low complexity. A Phosphoserine modification is found at serine 16. Residues 35–44 (ETEEQDNEDK) show a composition bias toward acidic residues. Positions 45-55 (DESKNQDENKD) are enriched in basic and acidic residues. Threonine 59 carries the phosphothreonine modification. CTP-binding positions include 111 to 119 (VFDLFHLGH) and lysine 149. The substrate site is built by lysine 149 and tryptophan 178. CTP contacts are provided by residues 195–196 (HD), tyrosine 200, and 223–227 (RTNGV). Serine 346 is modified (phosphoserine). The disordered stretch occupies residues 348–424 (ATEFANEFTG…LTQKKKQSAN (77 aa)). The span at 381–398 (NSNNTNTNSDSDSNTNST) shows a compositional bias: low complexity. Serine 401 carries the phosphoserine; by CK2 modification.

The protein belongs to the cytidylyltransferase family.

The protein resides in the membrane. The enzyme catalyses phosphocholine + CTP + H(+) = CDP-choline + diphosphate. The protein operates within phospholipid metabolism; phosphatidylcholine biosynthesis; phosphatidylcholine from phosphocholine: step 1/2. Its function is as follows. Catalyzes the key rate-limiting step in the CDP-choline pathway for phosphatidylcholine biosynthesis. In Saccharomyces cerevisiae (strain ATCC 204508 / S288c) (Baker's yeast), this protein is Choline-phosphate cytidylyltransferase (PCT1).